The chain runs to 428 residues: Histidinol dehydrogenase (428 aa).

The NAD(+) site is built by Tyr-124, Gln-186, and Asn-209. Substrate-binding residues include Ser-233, Gln-255, and His-258. The Zn(2+) site is built by Gln-255 and His-258. Catalysis depends on proton acceptor residues Glu-322 and His-323. Substrate contacts are provided by His-323, Asp-356, Glu-410, and His-415. Asp-356 lines the Zn(2+) pocket. His-415 contributes to the Zn(2+) binding site.

Belongs to the histidinol dehydrogenase family. The cofactor is Zn(2+).

The enzyme catalyses L-histidinol + 2 NAD(+) + H2O = L-histidine + 2 NADH + 3 H(+). It functions in the pathway amino-acid biosynthesis; L-histidine biosynthesis; L-histidine from 5-phospho-alpha-D-ribose 1-diphosphate: step 9/9. Catalyzes the sequential NAD-dependent oxidations of L-histidinol to L-histidinaldehyde and then to L-histidine. The protein is Histidinol dehydrogenase of Bacteroides fragilis (strain ATCC 25285 / DSM 2151 / CCUG 4856 / JCM 11019 / LMG 10263 / NCTC 9343 / Onslow / VPI 2553 / EN-2).